The sequence spans 231 residues: Allergen Ani s 10 (231 aa).

The signal sequence occupies residues 1–19; sequence MHLITALVLLLQLIHFITS. 7 consecutive repeat copies span residues 28–56, 57–85, 86–114, 115–143, 144–172, 173–201, and 204–231. A 6 X 29 AA tandem repeats of [EG]-G-P-G-P-V-[IV]-[SG]-G-S-G-I-G-[ND]-V-W-[NE]-K-A-N-E-[QP]-A-[AE]-[QEH]-Q-[EQ]-[NS]-I region spans residues 28 to 201; the sequence is GGPGPVVGGS…NEQAAEQQNI (174 aa). 2 disordered regions span residues 107–126 and 134–231; these read QAAH…GSGI and NEQA…SMQA. Low complexity-rich tracts occupy residues 114 to 123, 143 to 152, and 177 to 187; these read IEGPGPVVSG and PVISGSGIGNV.

In Anisakis simplex (Herring worm), this protein is Allergen Ani s 10.